Consider the following 217-residue polypeptide: Cytidylate kinase (217 aa).

ATP is bound at residue 9–17 (GPSSSGKSS).

This sequence belongs to the cytidylate kinase family. Type 1 subfamily.

The protein localises to the cytoplasm. It catalyses the reaction CMP + ATP = CDP + ADP. The catalysed reaction is dCMP + ATP = dCDP + ADP. The sequence is that of Cytidylate kinase from Mycoplasma genitalium (strain ATCC 33530 / DSM 19775 / NCTC 10195 / G37) (Mycoplasmoides genitalium).